Reading from the N-terminus, the 1285-residue chain is Dermonecrotic toxin (1285 aa).

The helical transmembrane segment at methionine 402 to leucine 422 threads the bilayer.

Its subcellular location is the cytoplasm. It is found in the secreted. It localises to the host membrane. This is a dermonecrotic toxin. This osteolytic toxin, induces bone resorption. Potent mitogen. This toxin is associated with the severe progressive form of the atrophic rhinitis, a major respiratory disease in pigs. The protein is Dermonecrotic toxin (toxA) of Pasteurella multocida.